Here is a 138-residue protein sequence, read N- to C-terminus: Ribosome maturation factor RimP (138 aa).

This sequence belongs to the RimP family.

It is found in the cytoplasm. Functionally, required for maturation of 30S ribosomal subunits. The polypeptide is Ribosome maturation factor RimP (Campylobacter concisus (strain 13826)).